We begin with the raw amino-acid sequence, 240 residues long: Glutamine amidotransferase-like protein chry6 (240 aa).

The 193-residue stretch at asparagine 13–valine 205 folds into the Glutamine amidotransferase type-1 domain. Cysteine 102 serves as the catalytic Nucleophile. Residues histidine 185 and glutamate 187 contribute to the active site.

This sequence belongs to the peptidase C26 family.

Its pathway is pigment biosynthesis. In terms of biological role, glutamine amidotransferase-like protein; part of the gene cluster that mediates the biosynthesis of the yellow pigment chrysogine. Pyruvic acid and anthranilic acid are likely substrates for the nonribosomal peptide synthetase chry1/NRPS14, with pyruvic acid adenylated by the first A domain and anthranilic acid by the second. If pyruvic acid and anthranilic acid are merged and released from chry1/NRPS14 by hydrolysis, a subsequent amidation would lead to 2-pyruvoylaminobenzamide. This process is probably catalyzed by the amidotransferase chry2 using glutamine as amino donor. The dehydrogenase chry5 that has a terminal berberine bridge domain for C-N cyclization could catalyze the cyclization of 2-pyruvoylaminobenzamide to yield acetyl-4(3H)-quinazolidinone. A final reduction of acetyl-4(3H)-quinazolidinone catalyzed by the oxidoreductase chry4 would result in chrysogine. The protein is Glutamine amidotransferase-like protein chry6 of Gibberella zeae (strain ATCC MYA-4620 / CBS 123657 / FGSC 9075 / NRRL 31084 / PH-1) (Wheat head blight fungus).